We begin with the raw amino-acid sequence, 218 residues long: Ras-related protein Rab-4A (218 aa).

Residues Gly-23, Thr-24, Gly-25, Lys-26, Ser-27, Cys-28, Ser-42, His-44, and Thr-45 each coordinate GTP. Ser-27 is a binding site for Mg(2+). The Switch 1 motif lies at 44–49; sequence HTIGVE. Mg(2+)-binding residues include Thr-45 and Asp-68. The Switch 2 motif lies at 70–79; the sequence is AGQERFRSVT. Gly-71 contributes to the GTP binding site. The residue at position 72 (Gln-72) is a 5-glutamyl serotonin. Residues Asn-126, Lys-127, Asp-129, Ala-157, and Leu-158 each coordinate GTP. Ser-190 is subject to Phosphoserine. Ser-204 is modified (phosphoserine; by CDK1). S-geranylgeranyl cysteine attachment occurs at residues Cys-216 and Cys-218. The residue at position 218 (Cys-218) is a Cysteine methyl ester.

The protein belongs to the small GTPase superfamily. Rab family. Interacts with RAB11FIP1, RABEP1, ZFYVE20 and RUFY1. Interacts with SGSM1, SGSM2 and SGSM3. Interacts (membrane-bound form) with NDRG1; the interaction involves NDRG1 in vesicular recycling of E-cadherin. Interacts (in GTP-bound form) with GRIPAP1. Interacts with RABEP1 and RBSN. Does not interact with HPS4. It depends on Mg(2+) as a cofactor. Post-translationally, serotonylation of Gln-72 by TGM2 during activation and aggregation of platelets leads to constitutive activation of GTPase activity. In terms of processing, phosphorylated by CDK1 kinase during mitosis.

It localises to the membrane. Its subcellular location is the cytoplasm. The protein resides in the early endosome membrane. It is found in the recycling endosome membrane. The catalysed reaction is GTP + H2O = GDP + phosphate + H(+). Its activity is regulated as follows. Regulated by guanine nucleotide exchange factors (GEFs) which promote the exchange of bound GDP for free GTP. Regulated by GTPase activating proteins (GAPs) which increase the GTP hydrolysis activity. Inhibited by GDP dissociation inhibitors (GDIs). The small GTPases Rab are key regulators of intracellular membrane trafficking, from the formation of transport vesicles to their fusion with membranes. Rabs cycle between an inactive GDP-bound form and an active GTP-bound form that is able to recruit to membranes different sets of downstream effectors directly responsible for vesicle formation, movement, tethering and fusion. RAB4A is involved in protein transport. Also plays a role in vesicular traffic. Mediates VEGFR2 endosomal trafficking to enhance VEGFR2 signaling. Acts as a regulator of platelet alpha-granule release during activation and aggregation of platelets. The sequence is that of Ras-related protein Rab-4A (RAB4A) from Bos taurus (Bovine).